A 456-amino-acid polypeptide reads, in one-letter code: tRNA modification GTPase MnmE (456 aa).

(6S)-5-formyl-5,6,7,8-tetrahydrofolate is bound by residues Arg-21, Glu-85, and Lys-124. Residues Gln-220–Gly-379 enclose the TrmE-type G domain. Asn-230 provides a ligand contact to K(+). GTP is bound by residues Asn-230–Ser-235, Ser-249–Thr-255, and Asp-274–Gly-277. Ser-234 provides a ligand contact to Mg(2+). K(+) contacts are provided by Ser-249, Ile-251, and Thr-254. Position 255 (Thr-255) interacts with Mg(2+). Residue Lys-456 participates in (6S)-5-formyl-5,6,7,8-tetrahydrofolate binding.

The protein belongs to the TRAFAC class TrmE-Era-EngA-EngB-Septin-like GTPase superfamily. TrmE GTPase family. In terms of assembly, homodimer. Heterotetramer of two MnmE and two MnmG subunits. Requires K(+) as cofactor.

Its subcellular location is the cytoplasm. In terms of biological role, exhibits a very high intrinsic GTPase hydrolysis rate. Involved in the addition of a carboxymethylaminomethyl (cmnm) group at the wobble position (U34) of certain tRNAs, forming tRNA-cmnm(5)s(2)U34. This is tRNA modification GTPase MnmE from Leptospira interrogans serogroup Icterohaemorrhagiae serovar copenhageni (strain Fiocruz L1-130).